The chain runs to 185 residues: Adenine phosphoribosyltransferase (185 aa).

It belongs to the purine/pyrimidine phosphoribosyltransferase family. As to quaternary structure, homodimer.

The protein resides in the cytoplasm. It catalyses the reaction AMP + diphosphate = 5-phospho-alpha-D-ribose 1-diphosphate + adenine. The protein operates within purine metabolism; AMP biosynthesis via salvage pathway; AMP from adenine: step 1/1. Functionally, catalyzes a salvage reaction resulting in the formation of AMP, that is energically less costly than de novo synthesis. In Shewanella denitrificans (strain OS217 / ATCC BAA-1090 / DSM 15013), this protein is Adenine phosphoribosyltransferase.